We begin with the raw amino-acid sequence, 417 residues long: MSQRLQSIKDHLVESAMGKGESKRKNSLLEKRPEDVVIVAANRSAIGKGFKGAFKDVNTDYLLYNFLNEFIGRFPEPLRADLNLIEEVACGNVLNVGAGATEHRAACLASGIPYSTPFVALNRQCSSGLTAVNDIANKIKVGQIDIGLALGVESMTNNYKNVNPLGMISSEELQKNREAKKCLIPMGITNENVAANFKISRKDQDEFAANSYQKAYKAKNEGLFEDEILPIKLPDGSICQSDEGPRPNVTAESLSSIRPAFIKDRGTTTAGNASQVSDGVAGVLLARRSVANQLNLPVLGRYIDFQTVGVPPEIMGVGPAYAIPKVLEATGLQVQDIDIFEINEAFAAQALYCIHKLGIDLNKVNPRGGAIALGHPLGCTGARQVATILRELKKDQIGVVSMCIGTGMGAAAIFIKE.

The N-terminal 15 residues, 1–15, are a transit peptide targeting the peroxisome; the sequence is MSQRLQSIKDHLVES. The segment at 1 to 15 is PTS2-type peroxisomal targeting signal; that stretch reads MSQRLQSIKDHLVES. The active-site Acyl-thioester intermediate is the C125. Catalysis depends on proton acceptor residues H375 and C403.

It belongs to the thiolase-like superfamily. Thiolase family. As to quaternary structure, homodimer. Interacts (via PTS2-type peroxisomal targeting signal region) with PEX7; leading to its translocation into peroxisomes.

Its subcellular location is the peroxisome. It localises to the mitochondrion intermembrane space. It carries out the reaction an acyl-CoA + acetyl-CoA = a 3-oxoacyl-CoA + CoA. Its pathway is lipid metabolism; fatty acid metabolism. Its function is as follows. Responsible for the thiolytic cleavage of straight chain 3-keto fatty acyl-CoAs (3-oxoacyl-CoAs). In Saccharomyces cerevisiae (strain ATCC 204508 / S288c) (Baker's yeast), this protein is 3-ketoacyl-CoA thiolase, peroxisomal (POT1).